The sequence spans 500 residues: Probable cytosol aminopeptidase (500 aa).

The Mn(2+) site is built by Lys-264 and Asp-269. Lys-276 is a catalytic residue. Asp-287, Asp-346, and Glu-348 together coordinate Mn(2+). Residue Arg-350 is part of the active site.

The protein belongs to the peptidase M17 family. Requires Mn(2+) as cofactor.

Its subcellular location is the cytoplasm. The catalysed reaction is Release of an N-terminal amino acid, Xaa-|-Yaa-, in which Xaa is preferably Leu, but may be other amino acids including Pro although not Arg or Lys, and Yaa may be Pro. Amino acid amides and methyl esters are also readily hydrolyzed, but rates on arylamides are exceedingly low.. It catalyses the reaction Release of an N-terminal amino acid, preferentially leucine, but not glutamic or aspartic acids.. Its function is as follows. Presumably involved in the processing and regular turnover of intracellular proteins. Catalyzes the removal of unsubstituted N-terminal amino acids from various peptides. The sequence is that of Probable cytosol aminopeptidase from Rickettsia canadensis (strain McKiel).